The primary structure comprises 210 residues: Probable high-affinity nitrate transporter-activating protein 2.2 (210 aa).

Positions 1–23 (MARFGAVIHRVFLPLLLLLVVLG) are cleaved as a signal peptide. A helical membrane pass occupies residues 182–202 (IEVAAGVLSAFSVAALAVFLV).

The protein belongs to the NAR2 family.

It is found in the cell membrane. Its function is as follows. Involved in nitrate transport. The chain is Probable high-affinity nitrate transporter-activating protein 2.2 (NAR2.2) from Oryza sativa subsp. japonica (Rice).